The following is a 439-amino-acid chain: Exosome complex component RRP45 (439 aa).

The tract at residues M1–A268 is ARE binding. At S65 the chain carries Phosphoserine. K297 carries the N6-acetyllysine; alternate modification. A Glycyl lysine isopeptide (Lys-Gly) (interchain with G-Cter in SUMO1); alternate cross-link involves residue K297. K297 is covalently cross-linked (Glycyl lysine isopeptide (Lys-Gly) (interchain with G-Cter in SUMO2); alternate). 4 positions are modified to phosphoserine: S306, V325, S327, and S346. Disordered regions lie at residues G335–D363 and L391–N439. Positions D349–G361 are enriched in acidic residues. S392, S394, K409, and I411 each carry phosphoserine. K419 is covalently cross-linked (Glycyl lysine isopeptide (Lys-Gly) (interchain with G-Cter in SUMO2)). Residues S425–N439 are compositionally biased toward basic residues.

Belongs to the RNase PH family. In terms of assembly, component of the RNA exosome core complex (Exo-9), composed of EXOSC1, EXOSC2, EXOSC3, EXOSC4, EXOSC5, EXOSC6, EXOSC7, EXOSC8 and EXOSC9; within the complex interacts with EXOSC3, EXOSC4, EXOSC5 and DIS3. The catalytically inactive RNA exosome core complex (Exo-9) associates with the catalytic subunit EXOSC10/RRP6. Exo-9 may associate with DIS3 to form the nucleolar exosome complex, or DIS3L to form the cytoplasmic exosome complex. Exo-9 is formed by a hexameric base ring consisting of the heterodimers EXOSC4-EXOSC9, EXOSC5-EXOSC8 and EXOSC6-EXOSC7, and a cap ring consisting of EXOSC1, EXOSC2 and EXOSC3. The RNA exosome complex associates with cofactors C1D/RRP47, MPHOSPH6/MPP6 and MTREX/MTR4. Interacts (via C-terminus region) with SETX (via N-terminus domain); the interaction enhances SETX sumoylation. Interacts with DIS3; the interaction is direct.

The protein resides in the cytoplasm. It is found in the nucleus. Its subcellular location is the nucleolus. It localises to the nucleoplasm. In terms of biological role, non-catalytic component of the RNA exosome complex which has 3'-&gt;5' exoribonuclease activity and participates in a multitude of cellular RNA processing and degradation events. In the nucleus, the RNA exosome complex is involved in proper maturation of stable RNA species such as rRNA, snRNA and snoRNA, in the elimination of RNA processing by-products and non-coding 'pervasive' transcripts, such as antisense RNA species and promoter-upstream transcripts (PROMPTs), and of mRNAs with processing defects, thereby limiting or excluding their export to the cytoplasm. The RNA exosome may be involved in Ig class switch recombination (CSR) and/or Ig variable region somatic hypermutation (SHM) by targeting AICDA deamination activity to transcribed dsDNA substrates. In the cytoplasm, the RNA exosome complex is involved in general mRNA turnover and specifically degrades inherently unstable mRNAs containing AU-rich elements (AREs) within their 3' untranslated regions, and in RNA surveillance pathways, preventing translation of aberrant mRNAs. It seems to be involved in degradation of histone mRNA. The catalytic inactive RNA exosome core complex of 9 subunits (Exo-9) is proposed to play a pivotal role in the binding and presentation of RNA for ribonucleolysis, and to serve as a scaffold for the association with catalytic subunits and accessory proteins or complexes. EXOSC9 binds to ARE-containing RNAs. The protein is Exosome complex component RRP45 (EXOSC9) of Homo sapiens (Human).